Consider the following 304-residue polypeptide: Nod factor export ATP-binding protein I (304 aa).

In terms of domain architecture, ABC transporter spans 6-236; sequence IDFQQVEKRY…EIGCDVIEIY (231 aa). 38-45 contacts ATP; that stretch reads GPNGAGKT.

Belongs to the ABC transporter superfamily. Lipooligosaccharide exporter (TC 3.A.1.102) family. As to quaternary structure, the complex is composed of two ATP-binding proteins (NodI) and two transmembrane proteins (NodJ).

It is found in the cell inner membrane. Its function is as follows. Part of the ABC transporter complex NodIJ involved in the export of the nodulation factors (Nod factors), the bacterial signal molecules that induce symbiosis and subsequent nodulation induction. Nod factors are LCO (lipo-chitin oligosaccharide), a modified beta-1,4-linked N-acetylglucosamine oligosaccharide. This subunit is responsible for energy coupling to the transport system. This chain is Nod factor export ATP-binding protein I, found in Burkholderia pseudomallei (strain K96243).